The following is a 378-amino-acid chain: Succinyl-diaminopimelate desuccinylase 2 (378 aa).

His68 contacts Zn(2+). Asp70 is an active-site residue. Asp101 contributes to the Zn(2+) binding site. Glu135 serves as the catalytic Proton acceptor. Zn(2+) contacts are provided by Glu136, Glu164, and His350.

It belongs to the peptidase M20A family. DapE subfamily. As to quaternary structure, homodimer. Zn(2+) is required as a cofactor. The cofactor is Co(2+).

It catalyses the reaction N-succinyl-(2S,6S)-2,6-diaminopimelate + H2O = (2S,6S)-2,6-diaminopimelate + succinate. It participates in amino-acid biosynthesis; L-lysine biosynthesis via DAP pathway; LL-2,6-diaminopimelate from (S)-tetrahydrodipicolinate (succinylase route): step 3/3. Catalyzes the hydrolysis of N-succinyl-L,L-diaminopimelic acid (SDAP), forming succinate and LL-2,6-diaminopimelate (DAP), an intermediate involved in the bacterial biosynthesis of lysine and meso-diaminopimelic acid, an essential component of bacterial cell walls. The polypeptide is Succinyl-diaminopimelate desuccinylase 2 (Alteromonas mediterranea (strain DSM 17117 / CIP 110805 / LMG 28347 / Deep ecotype)).